The chain runs to 121 residues: Small ribosomal subunit protein uS13 (121 aa).

The interval 91 to 121 (HRKGLPMRGQRTRTNARTRKGPRKAGVALKK) is disordered.

It belongs to the universal ribosomal protein uS13 family. Part of the 30S ribosomal subunit. Forms a loose heterodimer with protein S19. Forms two bridges to the 50S subunit in the 70S ribosome.

Functionally, located at the top of the head of the 30S subunit, it contacts several helices of the 16S rRNA. In the 70S ribosome it contacts the 23S rRNA (bridge B1a) and protein L5 of the 50S subunit (bridge B1b), connecting the 2 subunits; these bridges are implicated in subunit movement. Contacts the tRNAs in the A and P-sites. The sequence is that of Small ribosomal subunit protein uS13 from Cupriavidus necator (strain ATCC 17699 / DSM 428 / KCTC 22496 / NCIMB 10442 / H16 / Stanier 337) (Ralstonia eutropha).